The chain runs to 137 residues: FAD synthase (137 aa).

Residues 5–6, 10–13, and aspartate 88 contribute to the ATP site; these read TF and HPGH.

The protein belongs to the archaeal FAD synthase family. Homodimer. It depends on a divalent metal cation as a cofactor.

It carries out the reaction FMN + ATP + H(+) = FAD + diphosphate. It participates in cofactor biosynthesis; FAD biosynthesis; FAD from FMN: step 1/1. In terms of biological role, catalyzes the transfer of the AMP portion of ATP to flavin mononucleotide (FMN) to produce flavin adenine dinucleotide (FAD) coenzyme. The protein is FAD synthase of Archaeoglobus fulgidus (strain ATCC 49558 / DSM 4304 / JCM 9628 / NBRC 100126 / VC-16).